The chain runs to 126 residues: Protein ApaG (126 aa).

An ApaG domain is found at 2–126; the sequence is SALDNSIRVE…FRLATPGLLH (125 aa).

The polypeptide is Protein ApaG (Shewanella oneidensis (strain ATCC 700550 / JCM 31522 / CIP 106686 / LMG 19005 / NCIMB 14063 / MR-1)).